The primary structure comprises 918 residues: von Willebrand factor A domain-containing protein DDB_G0292016 (918 aa).

Residues 44–172 (KRCGLYSLKN…NVKVRVVISS (129 aa)) enclose the VIT domain. One can recognise a VWFA domain in the interval 299–467 (EFIFLIDCSG…NMEKQVMKLL (169 aa)). Residues 625–814 (VDIMNQSPPI…PSAPSQQKSV (190 aa)) form a disordered region. Residues 650-690 (ASGALSSSILSRKRSSSPSTATKRSSSSSFSSSYLSLSSSS) are compositionally biased toward low complexity. Over residues 716-746 (YESDGGDQSSEQDEEEEDDCDDFHEDLDEDL) the composition is skewed to acidic residues. Residues 752-774 (DVDKKECEKECKKKDSSKVDLKV) show a composition bias toward basic and acidic residues. Low complexity predominate over residues 777–814 (SKVPLPSRSPSVSKPTTTSLLSPSPKSAPSAPSQQKSV).

This chain is von Willebrand factor A domain-containing protein DDB_G0292016, found in Dictyostelium discoideum (Social amoeba).